The chain runs to 348 residues: Succinoglycan biosynthesis protein ExoO (348 aa).

The interval 322-348 (HSAPRAAPVTAAAERSPLGNDPRISKG) is disordered. Over residues 324–334 (APRAAPVTAAA) the composition is skewed to low complexity.

This sequence belongs to the glycosyltransferase 2 family.

It localises to the cytoplasm. It participates in glycan metabolism; exopolysaccharide biosynthesis. Functionally, glycosyltransferase required for the synthesis of succinoglycan (EPS I). Needed for the addition of the fifth sugar (glucose), catalyzes the formation of a beta-1,6 linkage between the fourth and fifth sugar. This chain is Succinoglycan biosynthesis protein ExoO (exoO), found in Rhizobium meliloti (strain 1021) (Ensifer meliloti).